The sequence spans 962 residues: RNA-binding protein 15 (962 aa).

Basic and acidic residues-rich tracts occupy residues 1 to 10 (MRSAGREPLP), 34 to 52 (LRRDDLRRPSTMKGKERSP), and 59 to 72 (RGGEDSSSRGERSK). Residues 1–167 (MRSAGREPLP…SAPGGGDGVE (167 aa)) form a disordered region. Low complexity predominate over residues 82-94 (GSSSGKTDSGGSR). Basic and acidic residues predominate over residues 97 to 112 (LHLDKSSSRGGSREYE). Ser108 carries the post-translational modification Phosphoserine. Low complexity predominate over residues 118–129 (SSSRLHSYSSPS). Over residues 134 to 149 (SGGGESRSSSRGGGGE) the composition is skewed to gly residues. Residues 150-159 (SRSSGAASSA) show a composition bias toward low complexity. The region spanning 169-251 (KTLKISELGS…RPLKIEAVYV (83 aa)) is the RRM 1 domain. A phosphoserine mark is found at Ser178, Ser207, and Ser209. Residue Lys245 forms a Glycyl lysine isopeptide (Lys-Gly) (interchain with G-Cter in SUMO2) linkage. Ser252, Ser256, and Ser258 each carry phosphoserine. Residues 257–297 (RSPLDKDAYAPSSSVVGTSVGSHRHAPGGGGGQRSLSPGGA) form a disordered region. Tyr265 carries the post-translational modification Phosphotyrosine. Residues 268–277 (SSSVVGTSVG) are compositionally biased toward low complexity. Phosphoserine occurs at positions 291, 293, and 364. RRM domains follow at residues 373–450 (RTLF…YGKA) and 454–528 (TRLW…FADT). Glycyl lysine isopeptide (Lys-Gly) (interchain with G-Cter in SUMO2) cross-links involve residues Lys405, Lys419, and Lys444. Position 449 is an N6-acetyllysine (Lys449). Basic and acidic residues-rich tracts occupy residues 553–580 (GHRAPDPLRSARDRTPPLLYRDRDRDLY) and 612–661 (SLDR…SERP). A disordered region spans residues 553–779 (GHRAPDPLRS…KQDGGTAPVA (227 aa)). Phosphothreonine is present on Thr567. At Arg577 the chain carries Asymmetric dimethylarginine; alternate; by PRMT1. Omega-N-methylarginine; alternate; by PRMT1 is present on Arg577. Residues Ser621, Ser655, Ser670, Ser674, and Ser701 each carry the phosphoserine modification. Basic and acidic residues-rich tracts occupy residues 673 to 692 (RSPELSSNRDRYNSDNDRSS), 701 to 729 (SPVRDRRGSLEKSQSDKRDRKNSASAERD), and 742 to 751 (NPLKKEDRSD). Residue Lys745 forms a Glycyl lysine isopeptide (Lys-Gly) (interchain with G-Cter in SUMO2) linkage. A compositionally biased stretch (low complexity) spans 754 to 771 (APSASTSSSKQKPPSQKQ). Ser768 and Ser782 each carry phosphoserine. Residues 778 to 957 (VAASSPKLCL…YLVMIIVRAK (180 aa)) form the SPOC domain. Positions 866-885 (GSSDSRSSSSSATSDTAAST) are disordered. Residues 867–885 (SSDSRSSSSSATSDTAAST) show a composition bias toward low complexity. Ser936 bears the Phosphoserine mark.

Belongs to the RRM Spen family. As to quaternary structure, component of the WMM complex, a N6-methyltransferase complex composed of a catalytic subcomplex, named MAC, and of an associated subcomplex, named MACOM. The MAC subcomplex is composed of METTL3 and METTL14. The MACOM subcomplex is composed of WTAP, ZC3H13, CBLL1/HAKAI, VIRMA, and, in some cases of RBM15 (RBM15 or RBM15B). Also a component of a MACOM-like complex, named WTAP complex, composed of WTAP, ZC3H13, CBLL1, VIRMA, RBM15, BCLAF1 and THRAP3. Interacts with RBPJ. Interacts (via SPOC domain) with SETD1B. Interacts with NXF1, the interaction is required to promote mRNA export. Interacts with SF3B1. Post-translationally, methylated at Arg-577 by PRMT1, leading to promote ubiquitination by CNOT4 and subsequent degradation by the proteasome. Ubiquitinated by CNOT4 following methylation at Arg-577 by PRMT1.

Its subcellular location is the nucleus speckle. The protein resides in the nucleus. The protein localises to the nucleoplasm. It localises to the nucleus envelope. It is found in the nucleus membrane. Functionally, RNA-binding protein that acts as a key regulator of N6-methyladenosine (m6A) methylation of RNAs, thereby regulating different processes, such as hematopoietic cell homeostasis, alternative splicing of mRNAs and X chromosome inactivation mediated by Xist RNA. Associated component of the WMM complex, a complex that mediates N6-methyladenosine (m6A) methylation of RNAs, a modification that plays a role in the efficiency of mRNA splicing and RNA processing. Plays a key role in m6A methylation, possibly by binding target RNAs and recruiting the WMM complex. Involved in random X inactivation mediated by Xist RNA: acts by binding Xist RNA and recruiting the WMM complex, which mediates m6A methylation, leading to target YTHDC1 reader on Xist RNA and promoting transcription repression activity of Xist. Required for the development of multiple tissues, such as the maintenance of the homeostasis of long-term hematopoietic stem cells and for megakaryocyte (MK) and B-cell differentiation. Regulates megakaryocyte differentiation by regulating alternative splicing of genes important for megakaryocyte differentiation; probably regulates alternative splicing via m6A regulation. Required for placental vascular branching morphogenesis and embryonic development of the heart and spleen. Acts as a regulator of thrombopoietin response in hematopoietic stem cells by regulating alternative splicing of MPL. May also function as an mRNA export factor, stimulating export and expression of RTE-containing mRNAs which are present in many retrotransposons that require to be exported prior to splicing. High affinity binding of pre-mRNA to RBM15 may allow targeting of the mRNP to the export helicase DBP5 in a manner that is independent of splicing-mediated NXF1 deposition, resulting in export prior to splicing. May be implicated in HOX gene regulation. This is RNA-binding protein 15 from Mus musculus (Mouse).